A 126-amino-acid polypeptide reads, in one-letter code: Large ribosomal subunit protein bL17 (126 aa).

Belongs to the bacterial ribosomal protein bL17 family. Part of the 50S ribosomal subunit. Contacts protein L32.

The protein is Large ribosomal subunit protein bL17 of Coxiella burnetii (strain CbuK_Q154) (Coxiella burnetii (strain Q154)).